Reading from the N-terminus, the 585-residue chain is T-cell surface protein tactile (585 aa).

A signal peptide spans 1–21 (MEKKWKYCAVYYIIQIHFVKG). Residues 22–519 (VWEKTVNTEE…IVVNKPKDGM (498 aa)) lie on the Extracellular side of the membrane. Residues 38–125 (GSDVNLTCQT…YECMLVLYPE (88 aa)) form the Ig-like V-type 1 domain. Residues Asn42, Asn97, Asn107, Asn148, Asn156, Asn166, Asn200, Asn215, Asn277, Asn278, Asn300, Asn350, and Asn368 are each glycosylated (N-linked (GlcNAc...) asparagine). An intrachain disulfide couples Cys45 to Cys118. The region spanning 156 to 238 (NQTLEIPCFQ…YRLHLSPVQI (83 aa)) is the Ig-like V-type 2 domain. Residues Cys163 and Cys247 are joined by a disulfide bond. The 107-residue stretch at 269 to 375 (PEIPVIVENN…VWNISSEKIT (107 aa)) folds into the Ig-like C2-type domain. Cys290 and Cys355 form a disulfide bridge. 3 stretches are compositionally biased toward polar residues: residues 385–418 (TDPPLSVTESTLDTQPSPASSVSPARYPATSSVT), 426–452 (RPNTTPQPSNSSMTTRGFNYPWTSSGT), and 460–475 (RIPSETYSSSPSGAGS). The disordered stretch occupies residues 385–475 (TDPPLSVTES…YSSSPSGAGS (91 aa)). N-linked (GlcNAc...) asparagine glycosylation occurs at Asn435. Asn497 carries an N-linked (GlcNAc...) asparagine glycan. A helical transmembrane segment spans residues 520–540 (SWPVIVAALLFCCMILFGLGV). The Cytoplasmic portion of the chain corresponds to 541 to 585 (RKWCQYQKEIMERPPPFKPPPPPIKYTCIQEPNESDLPYHEMETL).

As to quaternary structure, homodimer; disulfide-linked. Interacts with PVR. As to expression, expressed on normal T-cell lines and clones, and some transformed T-cells, but no other cultured cell lines tested. It is expressed at very low levels on activated B-cells.

Its subcellular location is the membrane. May be involved in adhesive interactions of activated T and NK cells during the late phase of the immune response. Promotes NK cell-target adhesion by interacting with PVR present on target cells. May function at a time after T and NK cells have penetrated the endothelium using integrins and selectins, when they are actively engaging diseased cells and moving within areas of inflammation. The sequence is that of T-cell surface protein tactile (CD96) from Homo sapiens (Human).